Consider the following 372-residue polypeptide: 3-ketodihydrosphingosine reductase TSC10 (372 aa).

An NADP(+)-binding site is contributed by valine 64. NADPH contacts are provided by glycine 67, serine 69, glycine 71, arginine 92, lysine 96, aspartate 123, and leucine 124. Residues 67 to 71 (GGSQG) carry the GXSXG motif. Aspartate 123 provides a ligand contact to NADP(+). The Proton donor role is filled by serine 205. NADP(+) contacts are provided by tyrosine 219, lysine 223, and serine 254. Tyrosine 219 acts as the Proton acceptor in catalysis. Catalysis depends on lysine 223, which acts as the Lowers pKa of active site Tyr. A helical membrane pass occupies residues 321–341 (LLQIPLAIFMCIFSPVWNAFV).

Belongs to the short-chain dehydrogenases/reductases (SDR) family.

Its subcellular location is the endoplasmic reticulum membrane. The enzyme catalyses sphinganine + NADP(+) = 3-oxosphinganine + NADPH + H(+). It functions in the pathway lipid metabolism; sphingolipid metabolism. Catalyzes the reduction of 3'-oxosphinganine (3-ketodihydrosphingosine/KDS) to sphinganine (dihydrosphingosine/DHS), the second step of de novo sphingolipid biosynthesis. This Yarrowia lipolytica (strain CLIB 122 / E 150) (Yeast) protein is 3-ketodihydrosphingosine reductase TSC10 (TSC10).